Reading from the N-terminus, the 289-residue chain is MENEFTYEDYQRTAEWLRSHTKHRPQVAVICGSGLGGLTAKLTQPQAFDYNEIPNFPQSTVQGHAGRLVFGFLNGRSCVMMQGRFHMYEGYSLSKVTFPVRVFHLLGVDTLVVTNAAGGLNPKFEVGDIMLIRDHINLPGFCGQNPLRGPNDERFGVRFPAMSDAYDRDMRQKAFNAWKQMGEQRELQEGTYIMSAGPTFETVAESCLLRMLGADAVGMSTVPEVIVARHCGLRVFGFSLITNKVVMDYNNLEKASHQEVLEAGKAAAQKLEQFVSILMESIPPRERAN.

Met1 carries the N-acetylmethionine modification. Residues Ser33, His64, and 84–86 each bind phosphate; that span reads RFH. A purine D-ribonucleoside is bound at residue Tyr88. Ala116 lines the phosphate pocket. A purine D-ribonucleoside contacts are provided by Glu201 and Met219. Ser220 lines the phosphate pocket. A purine D-ribonucleoside is bound by residues Asn243 and His257.

This sequence belongs to the PNP/MTAP phosphorylase family. As to quaternary structure, homotrimer.

The protein localises to the cytoplasm. The catalysed reaction is inosine + phosphate = alpha-D-ribose 1-phosphate + hypoxanthine. It catalyses the reaction guanosine + phosphate = alpha-D-ribose 1-phosphate + guanine. It carries out the reaction 2'-deoxyguanosine + phosphate = 2-deoxy-alpha-D-ribose 1-phosphate + guanine. The enzyme catalyses 2'-deoxyinosine + phosphate = 2-deoxy-alpha-D-ribose 1-phosphate + hypoxanthine. The protein operates within purine metabolism; purine nucleoside salvage. Its function is as follows. Catalyzes the phosphorolytic breakdown of the N-glycosidic bond in the beta-(deoxy)ribonucleoside molecules, with the formation of the corresponding free purine bases and pentose-1-phosphate. Preferentially acts on 6-oxopurine nucleosides including inosine and guanosine. The sequence is that of Purine nucleoside phosphorylase (Pnp) from Rattus norvegicus (Rat).